The chain runs to 142 residues: Domesticated amidase effector 2 (142 aa).

The N-terminal stretch at M1–V35 is a signal peptide. Residues C43 and H94 contribute to the active site.

Belongs to the cell wall amidase Dae2/Tae2-like family. In terms of processing, may be post-translationally modified, since the saliva wild-type protein is slightly heavier than the recombinant one. As to expression, detected in salivary glands and in the gut (at protein level).

It is found in the secreted. In terms of biological role, tick gut and saliva antibacterial peptide that directly antagonizes host skin commensals which enter the ticks during feeding. Acts as a cell wall hydrolase that cleaves the bond between gamma-D-glutamate-meso-diaminopimelate of a peptide stem and D-alanine of another peptide stem in peptidoglycans. In vitro, degrades peptidoglycans from both Gram-negative and Gram-positive bacteria. Is not able to traverse the protective outer membrane of Gram-negative bacteria. Is not able to kill Borrelia burgdorferi, one of the Lyme disease-causing bacteria. The protein is Domesticated amidase effector 2 of Ixodes scapularis (Black-legged tick).